The sequence spans 73 residues: Translational regulator CsrA (73 aa).

This sequence belongs to the CsrA/RsmA family. In terms of assembly, homodimer; the beta-strands of each monomer intercalate to form a hydrophobic core, while the alpha-helices form wings that extend away from the core.

Its subcellular location is the cytoplasm. Functionally, a translational regulator that binds mRNA to regulate translation initiation and/or mRNA stability. Usually binds in the 5'-UTR at or near the Shine-Dalgarno sequence preventing ribosome-binding, thus repressing translation. Its main target seems to be the major flagellin gene, while its function is anatagonized by FliW. The polypeptide is Translational regulator CsrA (Clostridium acetobutylicum (strain ATCC 824 / DSM 792 / JCM 1419 / IAM 19013 / LMG 5710 / NBRC 13948 / NRRL B-527 / VKM B-1787 / 2291 / W)).